Consider the following 228-residue polypeptide: UPF0173 metal-dependent hydrolase Tpen_1493 (228 aa).

The protein belongs to the UPF0173 family.

This chain is UPF0173 metal-dependent hydrolase Tpen_1493, found in Thermofilum pendens (strain DSM 2475 / Hrk 5).